Here is a 115-residue protein sequence, read N- to C-terminus: uncharacterized protein (115 aa).

Residues 9–30 (EGLRERGASGKNEQKKKKKEKI) form a disordered region.

This is an uncharacterized protein from Saccharomyces cerevisiae (strain ATCC 204508 / S288c) (Baker's yeast).